The sequence spans 399 residues: MMNLSAAANGRDEFPPYVVPSNAAAPPPSLLPTMEQQQESSIHREHHQLLGYNLEANSLALLPPSNAAAAHHHTTFAGGHSPHDILHFYTPPPSAASHYLAAAAGNPYSHLVSAPGTTFHQTSSSYYPPAAAAQAAPEYYFPTLVSSAEENMASFAATQLGLNLGYRTYFPPRGGYTYGHHPPRCQAEGCKADLSSAKRYHRRHKVCEHHSKAPVVVTAGGLHQRFCQQCSRFHLLDEFDDAKKSCRKRLADHNRRRRKSKPSDADAGDKKRAHANKAAAAKDKAESSSKNMDIGDGLGAQILGSALLSKEQDQTMDLGEVVKEAVDPKGKASMQQHYGFPFHSSSAGSCFPQTQAVSSDTTSNIGQVQEPSLGFHHQHHQHSNILQLGQAMFDLDFDH.

Residues 1-28 (MMNLSAAANGRDEFPPYVVPSNAAAPPP) form a disordered region. Low complexity predominate over residues 15–24 (PPYVVPSNAA). The SBP-type zinc-finger motif lies at 182-260 (PPRCQAEGCK…ADHNRRRRKS (79 aa)). The Zn(2+) site is built by Cys-185, Cys-190, Cys-207, His-210, Cys-227, Cys-230, His-234, and Cys-246. Residues 243-259 (KKSCRKRLADHNRRRRK) carry the Bipartite nuclear localization signal motif. Positions 250–292 (LADHNRRRRKSKPSDADAGDKKRAHANKAAAAKDKAESSSKNM) are disordered. Over residues 261–270 (KPSDADAGDK) the composition is skewed to basic and acidic residues.

In terms of tissue distribution, leaf ligular region, blade and sheath.

It localises to the nucleus. Functionally, involved in the formation of ligules and auricles during leaf organogenesis. The chain is Protein LIGULELESS 1 (LG1) from Zea mays (Maize).